Consider the following 381-residue polypeptide: Acetylornithine deacetylase (381 aa).

Position 79 (His-79) interacts with Zn(2+). The active site involves Asp-81. Asp-111 is a Zn(2+) binding site. The active site involves Glu-143. The Zn(2+) site is built by Glu-144, Glu-168, and His-354.

It belongs to the peptidase M20A family. ArgE subfamily. In terms of assembly, homodimer. Requires Zn(2+) as cofactor. Co(2+) is required as a cofactor. Glutathione serves as cofactor.

Its subcellular location is the cytoplasm. The enzyme catalyses N(2)-acetyl-L-ornithine + H2O = L-ornithine + acetate. Its pathway is amino-acid biosynthesis; L-arginine biosynthesis; L-ornithine from N(2)-acetyl-L-ornithine (linear): step 1/1. In terms of biological role, catalyzes the hydrolysis of the amide bond of N(2)-acetylated L-amino acids. Cleaves the acetyl group from N-acetyl-L-ornithine to form L-ornithine, an intermediate in L-arginine biosynthesis pathway, and a branchpoint in the synthesis of polyamines. The chain is Acetylornithine deacetylase from Buchnera aphidicola subsp. Schizaphis graminum (strain Sg).